The primary structure comprises 399 residues: Carbamoyl phosphate synthase small chain (399 aa).

Residues 1-209 (MEKFKLLKLG…SAINKKLHTS (209 aa)) are CPSase. L-glutamine contacts are provided by Ser-55, Gly-261, and Gly-263. In terms of domain architecture, Glutamine amidotransferase type-1 spans 213–399 (RIIVLDLGVK…VYIIYKSKSS (187 aa)). The Nucleophile role is filled by Cys-289. Leu-290, Gln-293, Asn-329, Gly-331, and Phe-332 together coordinate L-glutamine. Residues His-372 and Glu-374 contribute to the active site.

Belongs to the CarA family. Composed of two chains; the small (or glutamine) chain promotes the hydrolysis of glutamine to ammonia, which is used by the large (or ammonia) chain to synthesize carbamoyl phosphate. Tetramer of heterodimers (alpha,beta)4.

It is found in the plastid. The protein localises to the chloroplast. It carries out the reaction hydrogencarbonate + L-glutamine + 2 ATP + H2O = carbamoyl phosphate + L-glutamate + 2 ADP + phosphate + 2 H(+). It catalyses the reaction L-glutamine + H2O = L-glutamate + NH4(+). It participates in amino-acid biosynthesis; L-arginine biosynthesis; carbamoyl phosphate from bicarbonate: step 1/1. Its pathway is pyrimidine metabolism; UMP biosynthesis via de novo pathway; (S)-dihydroorotate from bicarbonate: step 1/3. In terms of biological role, small subunit of the glutamine-dependent carbamoyl phosphate synthetase (CPSase). CPSase catalyzes the formation of carbamoyl phosphate from the ammonia moiety of glutamine, carbonate, and phosphate donated by ATP, constituting the first step of 2 biosynthetic pathways, one leading to arginine and/or urea and the other to pyrimidine nucleotides. The small subunit (glutamine amidotransferase) binds and cleaves glutamine to supply the large subunit with the substrate ammonia. The protein is Carbamoyl phosphate synthase small chain of Cyanidium caldarium (Red alga).